Consider the following 189-residue polypeptide: Peptidyl-tRNA hydrolase (189 aa).

Y15 is a binding site for tRNA. The active-site Proton acceptor is H20. Positions 66, 68, and 114 each coordinate tRNA.

Belongs to the PTH family. As to quaternary structure, monomer.

The protein resides in the cytoplasm. It carries out the reaction an N-acyl-L-alpha-aminoacyl-tRNA + H2O = an N-acyl-L-amino acid + a tRNA + H(+). Hydrolyzes ribosome-free peptidyl-tRNAs (with 1 or more amino acids incorporated), which drop off the ribosome during protein synthesis, or as a result of ribosome stalling. In terms of biological role, catalyzes the release of premature peptidyl moieties from peptidyl-tRNA molecules trapped in stalled 50S ribosomal subunits, and thus maintains levels of free tRNAs and 50S ribosomes. In Streptococcus pyogenes serotype M1, this protein is Peptidyl-tRNA hydrolase.